A 161-amino-acid polypeptide reads, in one-letter code: 2-C-methyl-D-erythritol 2,4-cyclodiphosphate synthase (161 aa).

A divalent metal cation is bound by residues D10 and H12. Residues 10-12 and 36-37 each bind 4-CDP-2-C-methyl-D-erythritol 2-phosphate; these read DVH and HS. H44 serves as a coordination point for a divalent metal cation. 4-CDP-2-C-methyl-D-erythritol 2-phosphate is bound by residues 58-60, 63-67, 102-108, 134-137, F141, and R144; these read DIG, FPDTD, AQAPKMA, and TTTE.

The protein belongs to the IspF family. Homotrimer. Requires a divalent metal cation as cofactor.

It carries out the reaction 4-CDP-2-C-methyl-D-erythritol 2-phosphate = 2-C-methyl-D-erythritol 2,4-cyclic diphosphate + CMP. Its pathway is isoprenoid biosynthesis; isopentenyl diphosphate biosynthesis via DXP pathway; isopentenyl diphosphate from 1-deoxy-D-xylulose 5-phosphate: step 4/6. Functionally, involved in the biosynthesis of isopentenyl diphosphate (IPP) and dimethylallyl diphosphate (DMAPP), two major building blocks of isoprenoid compounds. Catalyzes the conversion of 4-diphosphocytidyl-2-C-methyl-D-erythritol 2-phosphate (CDP-ME2P) to 2-C-methyl-D-erythritol 2,4-cyclodiphosphate (ME-CPP) with a corresponding release of cytidine 5-monophosphate (CMP). This chain is 2-C-methyl-D-erythritol 2,4-cyclodiphosphate synthase, found in Shewanella baltica (strain OS155 / ATCC BAA-1091).